A 137-amino-acid polypeptide reads, in one-letter code: MVGISWQIVLAVIGVVAGFIITDKILNMKGYRGREILRPMELEELCSHLMTKYLVSVAAIAGDKKIVEGVDDYEIDEIRTLMRSMGSEEILLVSGSDYRYAMRGNGIFIYIKGKFVSLEDFAKVWKLVKSSIAGVGV.

The helical transmembrane segment at 4 to 21 threads the bilayer; the sequence is ISWQIVLAVIGVVAGFII.

Its subcellular location is the membrane. This is an uncharacterized protein from Archaeoglobus fulgidus (strain ATCC 49558 / DSM 4304 / JCM 9628 / NBRC 100126 / VC-16).